The sequence spans 104 residues: Pyrimidine/purine nucleoside phosphorylase (104 aa).

Belongs to the nucleoside phosphorylase PpnP family.

It catalyses the reaction a purine D-ribonucleoside + phosphate = a purine nucleobase + alpha-D-ribose 1-phosphate. The enzyme catalyses adenosine + phosphate = alpha-D-ribose 1-phosphate + adenine. The catalysed reaction is cytidine + phosphate = cytosine + alpha-D-ribose 1-phosphate. It carries out the reaction guanosine + phosphate = alpha-D-ribose 1-phosphate + guanine. It catalyses the reaction inosine + phosphate = alpha-D-ribose 1-phosphate + hypoxanthine. The enzyme catalyses thymidine + phosphate = 2-deoxy-alpha-D-ribose 1-phosphate + thymine. The catalysed reaction is uridine + phosphate = alpha-D-ribose 1-phosphate + uracil. It carries out the reaction xanthosine + phosphate = alpha-D-ribose 1-phosphate + xanthine. Catalyzes the phosphorolysis of diverse nucleosides, yielding D-ribose 1-phosphate and the respective free bases. Can use uridine, adenosine, guanosine, cytidine, thymidine, inosine and xanthosine as substrates. Also catalyzes the reverse reactions. The polypeptide is Pyrimidine/purine nucleoside phosphorylase (Geobacter sulfurreducens (strain ATCC 51573 / DSM 12127 / PCA)).